A 326-amino-acid polypeptide reads, in one-letter code: Glycerol-3-phosphate dehydrogenase [NAD(P)+] (326 aa).

Trp16, Arg36, Arg37, and Lys106 together coordinate NADPH. Sn-glycerol 3-phosphate is bound by residues Lys106 and Gly132. Ala136 lines the NADPH pocket. Positions 187, 240, 250, 251, and 252 each coordinate sn-glycerol 3-phosphate. The active-site Proton acceptor is Lys187. Residue Arg251 participates in NADPH binding. NADPH is bound by residues Val271 and Glu273.

The protein belongs to the NAD-dependent glycerol-3-phosphate dehydrogenase family.

The protein localises to the cytoplasm. It carries out the reaction sn-glycerol 3-phosphate + NAD(+) = dihydroxyacetone phosphate + NADH + H(+). The enzyme catalyses sn-glycerol 3-phosphate + NADP(+) = dihydroxyacetone phosphate + NADPH + H(+). It functions in the pathway membrane lipid metabolism; glycerophospholipid metabolism. Catalyzes the reduction of the glycolytic intermediate dihydroxyacetone phosphate (DHAP) to sn-glycerol 3-phosphate (G3P), the key precursor for phospholipid synthesis. The chain is Glycerol-3-phosphate dehydrogenase [NAD(P)+] from Deinococcus geothermalis (strain DSM 11300 / CIP 105573 / AG-3a).